Consider the following 286-residue polypeptide: Polyamine aminopropyltransferase (286 aa).

Positions Pro-5 to Asp-238 constitute a PABS domain. Gln-33 lines the S-methyl-5'-thioadenosine pocket. His-64 and Asp-88 together coordinate spermidine. Residues Glu-108 and Asp-140–Gly-141 each bind S-methyl-5'-thioadenosine. The active-site Proton acceptor is Asp-158. Asp-158 to Asp-161 provides a ligand contact to spermidine. Residue Pro-165 participates in S-methyl-5'-thioadenosine binding.

The protein belongs to the spermidine/spermine synthase family. In terms of assembly, homodimer or homotetramer.

It is found in the cytoplasm. It carries out the reaction S-adenosyl 3-(methylsulfanyl)propylamine + putrescine = S-methyl-5'-thioadenosine + spermidine + H(+). It participates in amine and polyamine biosynthesis; spermidine biosynthesis; spermidine from putrescine: step 1/1. In terms of biological role, catalyzes the irreversible transfer of a propylamine group from the amino donor S-adenosylmethioninamine (decarboxy-AdoMet) to putrescine (1,4-diaminobutane) to yield spermidine. The polypeptide is Polyamine aminopropyltransferase (Klebsiella pneumoniae (strain 342)).